The sequence spans 34 residues: Photosystem II reaction center protein Psb30 (34 aa).

The chain crosses the membrane as a helical span at residues V6–V26.

This sequence belongs to the Psb30/Ycf12 family. As to quaternary structure, PSII is composed of 1 copy each of membrane proteins PsbA, PsbB, PsbC, PsbD, PsbE, PsbF, PsbH, PsbI, PsbJ, PsbK, PsbL, PsbM, PsbT, PsbX, PsbY, PsbZ, Psb30/Ycf12, peripheral proteins of the oxygen-evolving complex and a large number of cofactors. It forms dimeric complexes.

Its subcellular location is the plastid. The protein resides in the chloroplast thylakoid membrane. Functionally, a core subunit of photosystem II (PSII), probably helps stabilize the reaction center. The protein is Photosystem II reaction center protein Psb30 of Heterosigma akashiwo (strain NIES-293 / 8280G21-1).